Consider the following 508-residue polypeptide: Inosine-5'-monophosphate dehydrogenase (508 aa).

CBS domains lie at 111-170 (FITD…EITL) and 174-230 (MTTN…PDAS). NAD(+)-binding positions include Asp-267 and 317–319 (GMG). K(+)-binding residues include Gly-319 and Gly-321. An IMP-binding site is contributed by Ser-322. Residue Cys-324 participates in K(+) binding. Catalysis depends on Cys-324, which acts as the Thioimidate intermediate. IMP contacts are provided by residues 357 to 359 (DGG), 380 to 381 (GF), and 404 to 408 (YRGMA). Arg-420 serves as the catalytic Proton acceptor. Gln-432 lines the IMP pocket. Position 492 (Gly-492) interacts with K(+).

It belongs to the IMPDH/GMPR family. As to quaternary structure, homotetramer. The cofactor is K(+).

The enzyme catalyses IMP + NAD(+) + H2O = XMP + NADH + H(+). Its pathway is purine metabolism; XMP biosynthesis via de novo pathway; XMP from IMP: step 1/1. Mycophenolic acid (MPA) is a non-competitive inhibitor that prevents formation of the closed enzyme conformation by binding to the same site as the amobile flap. In contrast, mizoribine monophosphate (MZP) is a competitive inhibitor that induces the closed conformation. MPA is a potent inhibitor of mammalian IMPDHs but a poor inhibitor of the bacterial enzymes. MZP is a more potent inhibitor of bacterial IMPDH. Catalyzes the conversion of inosine 5'-phosphate (IMP) to xanthosine 5'-phosphate (XMP), the first committed and rate-limiting step in the de novo synthesis of guanine nucleotides, and therefore plays an important role in the regulation of cell growth. In Leptospira interrogans serogroup Icterohaemorrhagiae serovar Lai (strain 56601), this protein is Inosine-5'-monophosphate dehydrogenase.